Here is a 179-residue protein sequence, read N- to C-terminus: Large ribosomal subunit protein uL5c (179 aa).

This sequence belongs to the universal ribosomal protein uL5 family. Part of the 50S ribosomal subunit; contacts the 5S rRNA.

The protein localises to the plastid. Its subcellular location is the organellar chromatophore. Functionally, binds 5S rRNA, forms part of the central protuberance of the 50S subunit. This chain is Large ribosomal subunit protein uL5c (rpl5), found in Paulinella chromatophora.